We begin with the raw amino-acid sequence, 540 residues long: Eukaryotic translation initiation factor 3 subunit L (540 aa).

Residues 307–515 (TFSDILLYIQ…IHIADTKVSH (209 aa)) enclose the PCI domain.

Belongs to the eIF-3 subunit L family. In terms of assembly, component of the eukaryotic translation initiation factor 3 (eIF-3) complex. The eIF-3 complex interacts with pix.

It is found in the cytoplasm. Functionally, component of the eukaryotic translation initiation factor 3 (eIF-3) complex, which is involved in protein synthesis of a specialized repertoire of mRNAs and, together with other initiation factors, stimulates binding of mRNA and methionyl-tRNAi to the 40S ribosome. The eIF-3 complex specifically targets and initiates translation of a subset of mRNAs involved in cell proliferation. The sequence is that of Eukaryotic translation initiation factor 3 subunit L from Drosophila grimshawi (Hawaiian fruit fly).